The sequence spans 2179 residues: FRAS1-related extracellular matrix protein 1 (2179 aa).

The first 21 residues, 1–21 (MNSLSWGAANAVLLLLLLAWA), serve as a signal peptide directing secretion. Positions 199 to 201 (RGD) match the Cell attachment site motif. 3 CSPG repeats span residues 296–390 (KAAF…LEVY), 413–500 (APRV…FRIF), and 521–615 (PPFL…FVLW). N335 carries N-linked (GlcNAc...) asparagine glycosylation. N-linked (GlcNAc...) asparagine glycans are attached at residues N560 and N622. CSPG repeat units follow at residues 642-754 (KEAP…FSVS), 776-867 (QVPE…LEVT), and 887-982 (EPPV…LVVS). N-linked (GlcNAc...) asparagine glycosylation occurs at N1014. 6 CSPG repeats span residues 1024–1126 (PPSI…VYVT), 1147–1254 (EAPD…IQLS), 1275–1372 (KPML…FYLW), 1393–1485 (GDIV…FIIS), 1506–1596 (LPVV…FMAT), and 1628–1724 (PRIT…FQIM). A glycan (N-linked (GlcNAc...) asparagine) is linked at N1566. The 100-residue stretch at 1731–1830 (ATPQILELKW…DDEVFEVILN (100 aa)) folds into the Calx-beta domain. The Cell attachment site signature appears at 1907–1909 (RGD). In terms of domain architecture, C-type lectin spans 2060-2174 (HSGYCHILIT…CRRAKPHNYV (115 aa)). Cysteines 2151 and 2165 form a disulfide.

It belongs to the FRAS1 family. As to quaternary structure, interacts with FREM2.

It is found in the secreted. The protein localises to the extracellular space. It localises to the extracellular matrix. The protein resides in the basement membrane. Extracellular matrix protein that plays a role in epidermal differentiation and is required for epidermal adhesion during embryonic development. The sequence is that of FRAS1-related extracellular matrix protein 1 from Homo sapiens (Human).